We begin with the raw amino-acid sequence, 122 residues long: Small ribosomal subunit protein bS16 (122 aa).

Residues 87–122 (VGKAKQAEARKAGAKNVAKQAAEAKAEETPADNTEA) are disordered.

This sequence belongs to the bacterial ribosomal protein bS16 family.

The sequence is that of Small ribosomal subunit protein bS16 from Prochlorococcus marinus (strain MIT 9303).